We begin with the raw amino-acid sequence, 204 residues long: dTTP/UTP pyrophosphatase (204 aa).

The active-site Proton acceptor is the aspartate 68.

Belongs to the Maf family. YhdE subfamily. The cofactor is a divalent metal cation.

Its subcellular location is the cytoplasm. It carries out the reaction dTTP + H2O = dTMP + diphosphate + H(+). The catalysed reaction is UTP + H2O = UMP + diphosphate + H(+). Its function is as follows. Nucleoside triphosphate pyrophosphatase that hydrolyzes dTTP and UTP. May have a dual role in cell division arrest and in preventing the incorporation of modified nucleotides into cellular nucleic acids. This is dTTP/UTP pyrophosphatase from Thermotoga petrophila (strain ATCC BAA-488 / DSM 13995 / JCM 10881 / RKU-1).